The chain runs to 280 residues: Formamidopyrimidine-DNA glycosylase (280 aa).

Proline 2 serves as the catalytic Schiff-base intermediate with DNA. Glutamate 3 serves as the catalytic Proton donor. Lysine 59 (proton donor; for beta-elimination activity) is an active-site residue. Residues histidine 92 and arginine 111 each coordinate DNA. The FPG-type zinc finger occupies 239–273 (NVYGQTGLPCNRCGTPIVKTKVAQRGTHYCPQCQQ). The active-site Proton donor; for delta-elimination activity is arginine 263.

It belongs to the FPG family. As to quaternary structure, monomer. Zn(2+) serves as cofactor.

It catalyses the reaction Hydrolysis of DNA containing ring-opened 7-methylguanine residues, releasing 2,6-diamino-4-hydroxy-5-(N-methyl)formamidopyrimidine.. The enzyme catalyses 2'-deoxyribonucleotide-(2'-deoxyribose 5'-phosphate)-2'-deoxyribonucleotide-DNA = a 3'-end 2'-deoxyribonucleotide-(2,3-dehydro-2,3-deoxyribose 5'-phosphate)-DNA + a 5'-end 5'-phospho-2'-deoxyribonucleoside-DNA + H(+). Functionally, involved in base excision repair of DNA damaged by oxidation or by mutagenic agents. Acts as a DNA glycosylase that recognizes and removes damaged bases. Has a preference for oxidized purines, such as 7,8-dihydro-8-oxoguanine (8-oxoG). Has AP (apurinic/apyrimidinic) lyase activity and introduces nicks in the DNA strand. Cleaves the DNA backbone by beta-delta elimination to generate a single-strand break at the site of the removed base with both 3'- and 5'-phosphates. The protein is Formamidopyrimidine-DNA glycosylase of Enterococcus faecalis (strain ATCC 700802 / V583).